The primary structure comprises 256 residues: Phosphate import ATP-binding protein PstB (256 aa).

The 242-residue stretch at 10–251 (IRTVNVNFYY…PEQKQTEDYI (242 aa)) folds into the ABC transporter domain. ATP is bound at residue 42–49 (GPSGCGKS).

This sequence belongs to the ABC transporter superfamily. Phosphate importer (TC 3.A.1.7) family. In terms of assembly, the complex is composed of two ATP-binding proteins (PstB), two transmembrane proteins (PstC and PstA) and a solute-binding protein (PstS).

Its subcellular location is the cell inner membrane. It carries out the reaction phosphate(out) + ATP + H2O = ADP + 2 phosphate(in) + H(+). Part of the ABC transporter complex PstSACB involved in phosphate import. Responsible for energy coupling to the transport system. The protein is Phosphate import ATP-binding protein PstB of Syntrophus aciditrophicus (strain SB).